A 475-amino-acid polypeptide reads, in one-letter code: Bifunctional protein HldE (475 aa).

Residues 1-318 (MKVTLPDFER…ENAVRGRAET (318 aa)) form a ribokinase region. 195–198 (NLSE) is a binding site for ATP. Asp-264 is an active-site residue. The tract at residues 344–475 (MTNGVFDILH…NIIKKIQKNS (132 aa)) is cytidylyltransferase.

In the N-terminal section; belongs to the carbohydrate kinase PfkB family. The protein in the C-terminal section; belongs to the cytidylyltransferase family. Homodimer.

It catalyses the reaction D-glycero-beta-D-manno-heptose 7-phosphate + ATP = D-glycero-beta-D-manno-heptose 1,7-bisphosphate + ADP + H(+). The catalysed reaction is D-glycero-beta-D-manno-heptose 1-phosphate + ATP + H(+) = ADP-D-glycero-beta-D-manno-heptose + diphosphate. It functions in the pathway nucleotide-sugar biosynthesis; ADP-L-glycero-beta-D-manno-heptose biosynthesis; ADP-L-glycero-beta-D-manno-heptose from D-glycero-beta-D-manno-heptose 7-phosphate: step 1/4. Its pathway is nucleotide-sugar biosynthesis; ADP-L-glycero-beta-D-manno-heptose biosynthesis; ADP-L-glycero-beta-D-manno-heptose from D-glycero-beta-D-manno-heptose 7-phosphate: step 3/4. Its function is as follows. Catalyzes the phosphorylation of D-glycero-D-manno-heptose 7-phosphate at the C-1 position to selectively form D-glycero-beta-D-manno-heptose-1,7-bisphosphate. In terms of biological role, catalyzes the ADP transfer from ATP to D-glycero-beta-D-manno-heptose 1-phosphate, yielding ADP-D-glycero-beta-D-manno-heptose. The protein is Bifunctional protein HldE of Cronobacter sakazakii (strain ATCC BAA-894) (Enterobacter sakazakii).